The following is a 319-amino-acid chain: Curved DNA-binding protein (319 aa).

Residues 5-69 (DYYKILGVEP…QKRAEFDEIR (65 aa)) form the J domain.

The protein resides in the cytoplasm. It is found in the nucleoid. Functionally, DNA-binding protein that preferentially recognizes a curved DNA sequence. It is probably a functional analog of DnaJ; displays overlapping activities with DnaJ, but functions under different conditions, probably acting as a molecular chaperone in an adaptive response to environmental stresses other than heat shock. Lacks autonomous chaperone activity; binds native substrates and targets them for recognition by DnaK. Its activity is inhibited by the binding of CbpM. The sequence is that of Curved DNA-binding protein from Pseudomonas putida (strain ATCC 700007 / DSM 6899 / JCM 31910 / BCRC 17059 / LMG 24140 / F1).